We begin with the raw amino-acid sequence, 99 residues long: Phosphoribosyl-ATP pyrophosphatase (99 aa).

The protein belongs to the PRA-PH family.

It is found in the cytoplasm. It catalyses the reaction 1-(5-phospho-beta-D-ribosyl)-ATP + H2O = 1-(5-phospho-beta-D-ribosyl)-5'-AMP + diphosphate + H(+). It participates in amino-acid biosynthesis; L-histidine biosynthesis; L-histidine from 5-phospho-alpha-D-ribose 1-diphosphate: step 2/9. This is Phosphoribosyl-ATP pyrophosphatase from Methanococcoides burtonii (strain DSM 6242 / NBRC 107633 / OCM 468 / ACE-M).